Consider the following 729-residue polypeptide: Beta-galactosidase 4 (729 aa).

Positions 1–35 (MAPAPTPAAAAGRRVAVLAAALVAASLAASVGVAN) are cleaved as a signal peptide. Glu-194 acts as the Proton donor in catalysis. Catalysis depends on Glu-263, which acts as the Nucleophile.

Belongs to the glycosyl hydrolase 35 family.

The protein resides in the secreted. It localises to the extracellular space. Its subcellular location is the apoplast. It carries out the reaction Hydrolysis of terminal non-reducing beta-D-galactose residues in beta-D-galactosides.. The polypeptide is Beta-galactosidase 4 (Oryza sativa subsp. japonica (Rice)).